Here is a 505-residue protein sequence, read N- to C-terminus: N-succinylglutamate 5-semialdehyde dehydrogenase (505 aa).

Residue 234–239 (GSAHTG) participates in NAD(+) binding. Active-site residues include E257 and C291.

It belongs to the aldehyde dehydrogenase family. AstD subfamily.

It catalyses the reaction N-succinyl-L-glutamate 5-semialdehyde + NAD(+) + H2O = N-succinyl-L-glutamate + NADH + 2 H(+). The protein operates within amino-acid degradation; L-arginine degradation via AST pathway; L-glutamate and succinate from L-arginine: step 4/5. In terms of biological role, catalyzes the NAD-dependent reduction of succinylglutamate semialdehyde into succinylglutamate. This Yersinia pestis (strain Pestoides F) protein is N-succinylglutamate 5-semialdehyde dehydrogenase.